A 327-amino-acid polypeptide reads, in one-letter code: Zinc transport protein ZntB (327 aa).

Topologically, residues 1–273 are cytoplasmic; the sequence is MEGIKGSEVN…SRRTYTMSLM (273 aa). The helical transmembrane segment at 274 to 294 threads the bilayer; sequence AMVFLPSTFLTGLFGVNLGGI. Residues 295 to 300 are Periplasmic-facing; sequence PGGGYQ. A helical transmembrane segment spans residues 301–321; sequence FGFSAFCIMLVVLIGGVAWWL. Topologically, residues 322 to 327 are cytoplasmic; it reads HRSKWL.

Belongs to the CorA metal ion transporter (MIT) (TC 1.A.35) family.

It localises to the cell inner membrane. It catalyses the reaction Zn(2+)(out) + H(+)(out) = Zn(2+)(in) + H(+)(in). Zinc transporter. Acts as a Zn(2+):proton symporter, which likely mediates zinc ion uptake. The sequence is that of Zinc transport protein ZntB from Enterobacter sp. (strain 638).